The following is a 986-amino-acid chain: Bifunctional glutamine synthetase adenylyltransferase/adenylyl-removing enzyme (986 aa).

The segment at 1 to 482 (MVTTVISNVK…RYGRLFAGEE (482 aa)) is adenylyl removase. Residues 486-986 (SRFGSLVFTG…RAAYEAVVKG (501 aa)) are adenylyl transferase.

It belongs to the GlnE family. Mg(2+) serves as cofactor.

The enzyme catalyses [glutamine synthetase]-O(4)-(5'-adenylyl)-L-tyrosine + phosphate = [glutamine synthetase]-L-tyrosine + ADP. It carries out the reaction [glutamine synthetase]-L-tyrosine + ATP = [glutamine synthetase]-O(4)-(5'-adenylyl)-L-tyrosine + diphosphate. Involved in the regulation of glutamine synthetase GlnA, a key enzyme in the process to assimilate ammonia. When cellular nitrogen levels are high, the C-terminal adenylyl transferase (AT) inactivates GlnA by covalent transfer of an adenylyl group from ATP to specific tyrosine residue of GlnA, thus reducing its activity. Conversely, when nitrogen levels are low, the N-terminal adenylyl removase (AR) activates GlnA by removing the adenylyl group by phosphorolysis, increasing its activity. The regulatory region of GlnE binds the signal transduction protein PII (GlnB) which indicates the nitrogen status of the cell. This is Bifunctional glutamine synthetase adenylyltransferase/adenylyl-removing enzyme from Caulobacter vibrioides (strain ATCC 19089 / CIP 103742 / CB 15) (Caulobacter crescentus).